Reading from the N-terminus, the 563-residue chain is MSVLKKNRRKDSDTPQEPSEKAKEQQAEAELRKLRQQFRKMVESRKSFKFRNQQKIASQYKEIKTLKTEQDEITLLLSLMKSSRNMNRSEKNYMELRLLLQTKEDYEALIKSLKVLLAELDEKILQMEKKIANQKQIFAKMQEANNPRKLQKQIHILETRLNLVTVHFDKMLTTNAKLRKEIEDLRFEKAAYDNVYQQLQHCLLMEKKTMNLAIEQSSQAYEQRVEAMARMAAMKDRQKKDTSQYNLEIRELERLYAHESKLKSFLLVKLNDRNEFEEQAKREEALKAKKHVKKNRGESFESYEVAHLRLLKLAESGNLNQLIEDFLAKEEKNFARFTYVTELNNDMEMMHKRTQRIQDEIILLRSQQKLSHDDNHSVLRQLEDKLRKTTEEADMYESKYGEVSKTLDLLKNSVEKLFKKINCDATKILVQLGETGKVTDINLPQYFAIIEKKTNDLLLLETYRRILEVEGAEAEIPPPFINPFWGGSALLKPPEPIKVIPPVLGADPFSDRLDDVEQPLDHSSLRQLVLDNYILKENRSKEVRGDSLPEKVDDFRSRKKVTM.

Residues 1–29 (MSVLKKNRRKDSDTPQEPSEKAKEQQAEA) are disordered. A compositionally biased stretch (basic and acidic residues) spans 10-29 (KDSDTPQEPSEKAKEQQAEA). Coiled coils occupy residues 18–201 (PSEK…QLQH), 233–291 (AMKD…AKKH), and 341–422 (TELN…KKIN).

Functionally, plays a role in spermiogenesis. Involved in the elongation of flagella and the formation of sperm heads. This Homo sapiens (Human) protein is Coiled-coil domain-containing protein 63.